The following is a 577-amino-acid chain: Dihydroxy-acid dehydratase (577 aa).

Basic and acidic residues predominate over residues M1–K10. The disordered stretch occupies residues M1 to R22. C56 lines the [2Fe-2S] cluster pocket. D88 is a Mg(2+) binding site. C129 is a [2Fe-2S] cluster binding site. 2 residues coordinate Mg(2+): D130 and K131. K131 carries the N6-carboxylysine modification. Position 201 (C201) interacts with [2Fe-2S] cluster. E453 is a Mg(2+) binding site. The active-site Proton acceptor is S479.

Belongs to the IlvD/Edd family. Homodimer. It depends on [2Fe-2S] cluster as a cofactor. Requires Mg(2+) as cofactor.

The enzyme catalyses (2R)-2,3-dihydroxy-3-methylbutanoate = 3-methyl-2-oxobutanoate + H2O. It catalyses the reaction (2R,3R)-2,3-dihydroxy-3-methylpentanoate = (S)-3-methyl-2-oxopentanoate + H2O. Its pathway is amino-acid biosynthesis; L-isoleucine biosynthesis; L-isoleucine from 2-oxobutanoate: step 3/4. The protein operates within amino-acid biosynthesis; L-valine biosynthesis; L-valine from pyruvate: step 3/4. In terms of biological role, functions in the biosynthesis of branched-chain amino acids. Catalyzes the dehydration of (2R,3R)-2,3-dihydroxy-3-methylpentanoate (2,3-dihydroxy-3-methylvalerate) into 2-oxo-3-methylpentanoate (2-oxo-3-methylvalerate) and of (2R)-2,3-dihydroxy-3-methylbutanoate (2,3-dihydroxyisovalerate) into 2-oxo-3-methylbutanoate (2-oxoisovalerate), the penultimate precursor to L-isoleucine and L-valine, respectively. This Dinoroseobacter shibae (strain DSM 16493 / NCIMB 14021 / DFL 12) protein is Dihydroxy-acid dehydratase.